The following is a 413-amino-acid chain: Tyrosine--tRNA ligase (413 aa).

The 'HIGH' region motif lies at 60–69 (PTAPDIHIGH). A 'KMSKS' region motif is present at residues 244 to 248 (KMSKS). An ATP-binding site is contributed by lysine 247. The region spanning 352–412 (LGIAQLLKQA…GKRRFARVTL (61 aa)) is the S4 RNA-binding domain.

It belongs to the class-I aminoacyl-tRNA synthetase family. TyrS type 2 subfamily. As to quaternary structure, homodimer.

The protein localises to the cytoplasm. The enzyme catalyses tRNA(Tyr) + L-tyrosine + ATP = L-tyrosyl-tRNA(Tyr) + AMP + diphosphate + H(+). Catalyzes the attachment of tyrosine to tRNA(Tyr) in a two-step reaction: tyrosine is first activated by ATP to form Tyr-AMP and then transferred to the acceptor end of tRNA(Tyr). This Cupriavidus pinatubonensis (strain JMP 134 / LMG 1197) (Cupriavidus necator (strain JMP 134)) protein is Tyrosine--tRNA ligase.